The following is a 559-amino-acid chain: CTP synthase (559 aa).

Residues 1–270 form an amidoligase domain region; it reads MTKFVFVTGG…DGLICDKLRL (270 aa). S13 contacts CTP. S13 serves as a coordination point for UTP. Residues 14–19 and D71 contribute to the ATP site; that span reads SLGKGI. The Mg(2+) site is built by D71 and E144. Residues 151–153, 191–196, and K227 each bind CTP; these read DIE and KTKPTQ. UTP-binding positions include 191 to 196 and K227; that span reads KTKPTQ. Positions 295-548 constitute a Glutamine amidotransferase type-1 domain; it reads TIAMVGKYVD…IKAAIDHQKS (254 aa). G357 is a binding site for L-glutamine. C384 (nucleophile; for glutamine hydrolysis) is an active-site residue. L-glutamine contacts are provided by residues 385–388, E408, and R474; that span reads LGMQ. Residues H521 and E523 contribute to the active site.

The protein belongs to the CTP synthase family. Homotetramer.

The catalysed reaction is UTP + L-glutamine + ATP + H2O = CTP + L-glutamate + ADP + phosphate + 2 H(+). The enzyme catalyses L-glutamine + H2O = L-glutamate + NH4(+). It catalyses the reaction UTP + NH4(+) + ATP = CTP + ADP + phosphate + 2 H(+). It participates in pyrimidine metabolism; CTP biosynthesis via de novo pathway; CTP from UDP: step 2/2. Allosterically activated by GTP, when glutamine is the substrate; GTP has no effect on the reaction when ammonia is the substrate. The allosteric effector GTP functions by stabilizing the protein conformation that binds the tetrahedral intermediate(s) formed during glutamine hydrolysis. Inhibited by the product CTP, via allosteric rather than competitive inhibition. Functionally, catalyzes the ATP-dependent amination of UTP to CTP with either L-glutamine or ammonia as the source of nitrogen. Regulates intracellular CTP levels through interactions with the four ribonucleotide triphosphates. This Paracidovorax citrulli (strain AAC00-1) (Acidovorax citrulli) protein is CTP synthase.